A 109-amino-acid polypeptide reads, in one-letter code: Elongation factor G, chloroplastic (109 aa).

The protein belongs to the GTP-binding elongation factor family. EF-G/EF-2 subfamily.

It localises to the plastid. It is found in the chloroplast. It participates in protein biosynthesis; polypeptide chain elongation. Functionally, chloroplast-localized elongation factor EF-G involved in protein synthesis in plastids. Catalyzes the GTP-dependent ribosomal translocation step during translation elongation. During this step, the ribosome changes from the pre-translocational (PRE) to the post-translocational (POST) state as the newly formed A-site-bound peptidyl-tRNA and P-site-bound deacylated tRNA move to the P and E sites, respectively. Catalyzes the coordinated movement of the two tRNA molecules, the mRNA and conformational changes in the ribosome. This Arachis hypogaea (Peanut) protein is Elongation factor G, chloroplastic.